The chain runs to 988 residues: uncharacterized protein (988 aa).

A signal peptide spans 1–17; that stretch reads MIRLVFLFLLVVLSVEL. The segment at 111 to 176 is disordered; sequence YQNPSTFPST…SKLNQKSSKS (66 aa). Positions 114–140 are enriched in low complexity; that stretch reads PSTFPSTTTASTTTSTTTMPPTYQTTT. Residues Asn-247, Asn-389, Asn-529, and Asn-601 are each glycosylated (N-linked (GlcNAc...) asparagine). Residues 690-710 form a helical membrane-spanning segment; sequence IMIFTIFSVLSALTCLMCMYL. Asn-720 is a glycosylation site (N-linked (GlcNAc...) asparagine). Helical transmembrane passes span 721–741, 753–773, 784–804, 832–852, 864–884, and 891–911; these read LTAV…AFII, LLFP…TVLI, VLIA…WLLL, MILL…IFAL, LMIS…LPLI, and TVMA…SHTG. Residues 966–988 are disordered; sequence RSEDTLRRNTSLYGTEGYELPTP. Asn-974 carries an N-linked (GlcNAc...) asparagine glycan.

It is found in the membrane. This is an uncharacterized protein from Caenorhabditis elegans.